Consider the following 999-residue polypeptide: Sarcoplasmic/endoplasmic reticulum calcium ATPase 3 (999 aa).

Methionine 1 bears the N-acetylmethionine mark. At 1 to 48 (MEEAHLLSAADVLRRFSVTAEGGLTLEQVTDARERYGPNELPTEEGKS) the chain is on the cytoplasmic side. At serine 17 the chain carries Phosphoserine. At threonine 19 the chain carries Phosphothreonine. Residues 49–69 (LWELVVEQFEDLLVRILLLAA) traverse the membrane as a helical segment. Topologically, residues 70–89 (LVSFVLAWFEEGEETTTAFV) are lumenal. The chain crosses the membrane as a helical span at residues 90–110 (EPLVIMLILVANAIVGVWQER). Over 111-253 (NAESAIEALK…PERTPLQRKL (143 aa)) the chain is Cytoplasmic. The chain crosses the membrane as a helical span at residues 254-273 (DEFGRQLSHAISVICVAVWV). The Lumenal segment spans residues 274–295 (INIGHFADPAHGGSWLRGAVYY). Residues 296–313 (FKIAVALAVAAIPEGLPA) traverse the membrane as a helical segment. 4 residues coordinate Ca(2+): valine 304, alanine 305, isoleucine 307, and glutamate 309. The Cytoplasmic segment spans residues 314–757 (VITTCLALGT…EEGRAIYNNM (444 aa)). The active-site 4-aspartylphosphate intermediate is the aspartate 351. Mg(2+)-binding residues include aspartate 351 and threonine 353. Residue threonine 353 participates in ATP binding. Positions 370–400 (AEAEAGACRLHEFTISGTTYTPEGEVRQGEQ) are interaction with phospholamban 1. Phosphothreonine is present on threonine 415. Residues glutamate 442, arginine 489, lysine 515, arginine 560, threonine 625, glycine 626, and aspartate 627 each coordinate ATP. Residue serine 662 is modified to Phosphoserine. Positions 678 and 684 each coordinate ATP. Aspartate 703 provides a ligand contact to Mg(2+). Residue asparagine 706 participates in ATP binding. Residues 758-777 (KQFIRYLISSNVGEVVCIFL) form a helical membrane-spanning segment. 2 residues coordinate Ca(2+): asparagine 768 and glutamate 771. At 778–787 (TAILGLPEAL) the chain is on the lumenal side. Residues 788-808 (IPVQLLWVNLVTDGLPATALG) form a helical membrane-spanning segment. Positions 788-808 (IPVQLLWVNLVTDGLPATALG) are interaction with phospholamban 2. Residues asparagine 796, threonine 799, and aspartate 800 each contribute to the Ca(2+) site. At 809 to 828 (FNPPDLDIMEKLPRNPREAL) the chain is on the cytoplasmic side. A helical membrane pass occupies residues 829–851 (ISGWLFFRYLAIGVYVGLATVAA). Residues 852 to 897 (ATWWFLYDAEGPQVTFHQLRNFLKCSEDNPLFAGIDCEVFESRFPT) are Lumenal-facing. The chain crosses the membrane as a helical span at residues 898–917 (TMALSVLVTIEMCNALNSVS). Glutamate 908 lines the Ca(2+) pocket. Residues 918–930 (ENQSLLRMPPWLN) lie on the Cytoplasmic side of the membrane. Residues 931–949 (PWLLGAVVMSMALHFLILL) traverse the membrane as a helical segment. The Lumenal segment spans residues 950–964 (VPPLPLIFQVTPLSG). Residues 965–985 (RQWGVVLQMSLPVILLDEALK) traverse the membrane as a helical segment. Topologically, residues 986–999 (YLSRHHVDEKKDLK) are cytoplasmic.

It belongs to the cation transport ATPase (P-type) (TC 3.A.3) family. Type IIA subfamily. Interacts with sarcolipin (SLN). Interacts with phospholamban (PLN). Interacts with myoregulin (MRLN). Interacts with DWORF. Interacts with VMP1. Interacts with TUNAR; the interaction occurs at low levels in low glucose conditions and is increased by high glucose levels. Mg(2+) serves as cofactor. In terms of tissue distribution, found in most tissues. Most abundant in large and small intestine, spleen and lung. Also detected in PC12 cells.

It localises to the endoplasmic reticulum membrane. The protein localises to the sarcoplasmic reticulum membrane. It catalyses the reaction Ca(2+)(in) + ATP + H2O = Ca(2+)(out) + ADP + phosphate + H(+). With respect to regulation, inhibited by sarcolipin (SLN), phospholamban (PLN) and myoregulin (MRLN). Enhanced by DWORF; DWORF increases activity by displacing sarcolipin (SLN), phospholamban (PLN) and myoregulin (MRLN). Functionally, this magnesium-dependent enzyme catalyzes the hydrolysis of ATP coupled with the transport of the calcium. Transports calcium ions from the cytosol into the sarcoplasmic/endoplasmic reticulum lumen. Contributes to calcium sequestration involved in muscular excitation/contraction. This magnesium-dependent enzyme catalyzes the hydrolysis of ATP coupled with the transport of calcium. Transports calcium ions from the cytosol into the sarcoplasmic/endoplasmic reticulum lumen. Contributes to calcium sequestration involved in muscular excitation/contraction. This chain is Sarcoplasmic/endoplasmic reticulum calcium ATPase 3 (Atp2a3), found in Rattus norvegicus (Rat).